A 428-amino-acid polypeptide reads, in one-letter code: Adenylosuccinate synthetase (428 aa).

GTP contacts are provided by residues 12–18 and 40–42; these read GDEGKGK and GHT. Asp-13 serves as the catalytic Proton acceptor. The Mg(2+) site is built by Asp-13 and Gly-40. IMP is bound by residues 13–16, 38–41, Thr-130, Arg-144, Gln-225, Thr-240, and Arg-304; these read DEGK and NAGH. His-41 serves as the catalytic Proton donor. Position 300–306 (300–306) interacts with substrate; that stretch reads VTTGRAR. GTP contacts are provided by residues Arg-306, 332-334, and 414-416; these read KID and SVG.

The protein belongs to the adenylosuccinate synthetase family. Homodimer. It depends on Mg(2+) as a cofactor.

Its subcellular location is the cytoplasm. The enzyme catalyses IMP + L-aspartate + GTP = N(6)-(1,2-dicarboxyethyl)-AMP + GDP + phosphate + 2 H(+). The protein operates within purine metabolism; AMP biosynthesis via de novo pathway; AMP from IMP: step 1/2. Plays an important role in the de novo pathway of purine nucleotide biosynthesis. Catalyzes the first committed step in the biosynthesis of AMP from IMP. This chain is Adenylosuccinate synthetase, found in Clostridium botulinum (strain Loch Maree / Type A3).